Here is a 366-residue protein sequence, read N- to C-terminus: UDP-N-acetylglucosamine--N-acetylmuramyl-(pentapeptide) pyrophosphoryl-undecaprenol N-acetylglucosamine transferase (366 aa).

Residues 10 to 12, Asn124, Arg166, Ser196, and Gln296 each bind UDP-N-acetyl-alpha-D-glucosamine; that span reads TGG.

Belongs to the glycosyltransferase 28 family. MurG subfamily.

It localises to the cell membrane. It catalyses the reaction di-trans,octa-cis-undecaprenyl diphospho-N-acetyl-alpha-D-muramoyl-L-alanyl-D-glutamyl-meso-2,6-diaminopimeloyl-D-alanyl-D-alanine + UDP-N-acetyl-alpha-D-glucosamine = di-trans,octa-cis-undecaprenyl diphospho-[N-acetyl-alpha-D-glucosaminyl-(1-&gt;4)]-N-acetyl-alpha-D-muramoyl-L-alanyl-D-glutamyl-meso-2,6-diaminopimeloyl-D-alanyl-D-alanine + UDP + H(+). It functions in the pathway cell wall biogenesis; peptidoglycan biosynthesis. Cell wall formation. Catalyzes the transfer of a GlcNAc subunit on undecaprenyl-pyrophosphoryl-MurNAc-pentapeptide (lipid intermediate I) to form undecaprenyl-pyrophosphoryl-MurNAc-(pentapeptide)GlcNAc (lipid intermediate II). The sequence is that of UDP-N-acetylglucosamine--N-acetylmuramyl-(pentapeptide) pyrophosphoryl-undecaprenol N-acetylglucosamine transferase from Alkaliphilus oremlandii (strain OhILAs) (Clostridium oremlandii (strain OhILAs)).